The following is a 954-amino-acid chain: Xylanolytic transcriptional activator xlnR (954 aa).

Disordered stretches follow at residues 1–39 and 51–93; these read MSTT…LAEG and REAA…SQRD. Over residues 8 to 21 the composition is skewed to low complexity; the sequence is HFPHSYSPFSSSRS. Residues 22–33 show a composition bias toward polar residues; the sequence is LNRMAQSQTSGL. Over residues 64 to 78 the composition is skewed to basic and acidic residues; the sequence is GKPKDQFQVDNDNHH. The span at 82-91 shows a compositional bias: polar residues; the sequence is SLSNFKNPSQ. The segment at residues 119 to 145 is a DNA-binding region (zn(2)-C6 fungal-type); the sequence is CDQCNQLRTKCDGQNPCAHCIDFGLTC. 4 disordered regions span residues 173–226, 310–333, 566–607, and 758–777; these read ATNS…HSEA, LMNP…TENP, ELPP…PGNT, and MDGS…STVE. A compositionally biased stretch (polar residues) spans 174-183; the sequence is TNSGQPNGSS. A compositionally biased stretch (basic and acidic residues) spans 574 to 590; that stretch reads ARPDAERDGDPDADLSK. Over residues 764 to 777 the composition is skewed to polar residues; sequence NHVSPSGRSSSTVE.

The protein belongs to the xlnR/xlr1 family.

It localises to the nucleus. Functionally, transcriptional activator of the xylanolytic system. Involved in the regulation of extracellular cellulolytic and xylanolytic genes and in the regulation of the intracellular activities of D-xylose catabolic genes in the pentose catabolic pathway (PCP) in response to the presence of D-xylose. This is Xylanolytic transcriptional activator xlnR (xlnR) from Aspergillus fumigatus (strain ATCC MYA-4609 / CBS 101355 / FGSC A1100 / Af293) (Neosartorya fumigata).